Consider the following 495-residue polypeptide: UDP-N-acetylmuramoyl-L-alanyl-D-glutamate--2,6-diaminopimelate ligase (495 aa).

Residues Leu-28, Ser-30, and 45–47 (HRV) each bind UDP-N-acetyl-alpha-D-muramoyl-L-alanyl-D-glutamate. An ATP-binding site is contributed by 117-123 (GTNGKTT). UDP-N-acetyl-alpha-D-muramoyl-L-alanyl-D-glutamate is bound by residues Asn-158, 159–160 (TT), Ser-186, Gln-192, and Arg-194. An N6-carboxylysine modification is found at Lys-226. Residues Arg-394, 418-421 (DNPR), Gly-469, and Glu-473 each bind meso-2,6-diaminopimelate. Residues 418–421 (DNPR) carry the Meso-diaminopimelate recognition motif motif.

This sequence belongs to the MurCDEF family. MurE subfamily. Requires Mg(2+) as cofactor. In terms of processing, carboxylation is probably crucial for Mg(2+) binding and, consequently, for the gamma-phosphate positioning of ATP.

It is found in the cytoplasm. It catalyses the reaction UDP-N-acetyl-alpha-D-muramoyl-L-alanyl-D-glutamate + meso-2,6-diaminopimelate + ATP = UDP-N-acetyl-alpha-D-muramoyl-L-alanyl-gamma-D-glutamyl-meso-2,6-diaminopimelate + ADP + phosphate + H(+). It functions in the pathway cell wall biogenesis; peptidoglycan biosynthesis. Catalyzes the addition of meso-diaminopimelic acid to the nucleotide precursor UDP-N-acetylmuramoyl-L-alanyl-D-glutamate (UMAG) in the biosynthesis of bacterial cell-wall peptidoglycan. The chain is UDP-N-acetylmuramoyl-L-alanyl-D-glutamate--2,6-diaminopimelate ligase from Histophilus somni (strain 129Pt) (Haemophilus somnus).